Reading from the N-terminus, the 339-residue chain is Silicatein (339 aa).

A signal peptide spans 1-18 (MAIVYGAILFQIILIACA). Residues 19 to 122 (EFPPEWHAWK…REYQAPATVS (104 aa)) constitute a propeptide that is removed on maturation. N,N-dimethylleucine; alternate is present on Leu123. The residue at position 123 (Leu123) is an N-methylleucine; alternate. Ser188 carries the post-translational modification Phosphoserine. Tyr219 carries the phosphotyrosine modification. Catalysis depends on residues His286 and Asn306. Ser335 carries the phosphoserine modification.

This sequence belongs to the peptidase C1 family. In terms of assembly, homodimer. Homodimerization occurs as a result of non-covalent interactions and not through disulfide linkages between the two monomers.

In terms of biological role, polymerizes silica around the axial filament during spicule formation. This is Silicatein from Petrosia ficiformis (Common Mediterranean sponge).